We begin with the raw amino-acid sequence, 117 residues long: Prefoldin subunit beta (117 aa).

This sequence belongs to the prefoldin subunit beta family. Heterohexamer of two alpha and four beta subunits.

The protein localises to the cytoplasm. Its function is as follows. Molecular chaperone capable of stabilizing a range of proteins. Seems to fulfill an ATP-independent, HSP70-like function in archaeal de novo protein folding. The sequence is that of Prefoldin subunit beta from Pyrococcus furiosus (strain ATCC 43587 / DSM 3638 / JCM 8422 / Vc1).